A 331-amino-acid chain; its full sequence is Glycerol-3-phosphate dehydrogenase [NAD(P)+] (331 aa).

NADPH is bound by residues W11, R30, and K105. Sn-glycerol 3-phosphate is bound by residues K105, G134, and S136. An NADPH-binding site is contributed by A138. Sn-glycerol 3-phosphate is bound by residues K189, D242, S252, R253, and N254. The Proton acceptor role is filled by K189. An NADPH-binding site is contributed by R253. NADPH is bound by residues V277 and E279.

It belongs to the NAD-dependent glycerol-3-phosphate dehydrogenase family.

The protein resides in the cytoplasm. The enzyme catalyses sn-glycerol 3-phosphate + NAD(+) = dihydroxyacetone phosphate + NADH + H(+). It carries out the reaction sn-glycerol 3-phosphate + NADP(+) = dihydroxyacetone phosphate + NADPH + H(+). Its pathway is membrane lipid metabolism; glycerophospholipid metabolism. Catalyzes the reduction of the glycolytic intermediate dihydroxyacetone phosphate (DHAP) to sn-glycerol 3-phosphate (G3P), the key precursor for phospholipid synthesis. This is Glycerol-3-phosphate dehydrogenase [NAD(P)+] from Janthinobacterium sp. (strain Marseille) (Minibacterium massiliensis).